The chain runs to 59 residues: UPF0434 protein HDEF_0234 (59 aa).

It belongs to the UPF0434 family.

This is UPF0434 protein HDEF_0234 from Hamiltonella defensa subsp. Acyrthosiphon pisum (strain 5AT).